The chain runs to 177 residues: Large ribosomal subunit protein uL6 (177 aa).

Residues 152–171 are compositionally biased toward basic and acidic residues; that stretch reads RPPEPYKGKGVRYDDEEVRR. Residues 152 to 177 are disordered; it reads RPPEPYKGKGVRYDDEEVRRKEAKKK.

Belongs to the universal ribosomal protein uL6 family. Part of the 50S ribosomal subunit.

This protein binds to the 23S rRNA, and is important in its secondary structure. It is located near the subunit interface in the base of the L7/L12 stalk, and near the tRNA binding site of the peptidyltransferase center. The polypeptide is Large ribosomal subunit protein uL6 (Shewanella oneidensis (strain ATCC 700550 / JCM 31522 / CIP 106686 / LMG 19005 / NCIMB 14063 / MR-1)).